Consider the following 1487-residue polypeptide: Probable serine/threonine-protein kinase roco11 (1487 aa).

A disordered region spans residues 108–134 (TQPSSSHNHSNHHHHHHQQQLQQQQQQ). The segment covering 116 to 125 (HSNHHHHHHQ) has biased composition (basic residues). LRR repeat units follow at residues 295-316 (NLAELDLSYNNIKEIPKEICQL), 318-340 (HLKILNMNNNQLDDLPLELANLT), and 341-362 (NLKYLAVQDNPLNKFPHHIIEQ). One can recognise a Roc domain in the interval 379 to 564 (KSETWNKVKL…KILTNEAEKS (186 aa)). The tract at residues 379-564 (KSETWNKVKL…KILTNEAEKS (186 aa)) is small GTPase-like. GTP is bound by residues 392 to 399 (GQEGVGKS), 448 to 452 (DFGGQ), and 507 to 510 (THCD). One can recognise a COR domain in the interval 678–872 (VNQKYIDYND…KTYWANGILL (195 aa)). The tract at residues 891-1007 (SILPNNSSST…NNNNNNNNNI (117 aa)) is disordered. Over residues 897–931 (SSSTSSSTSSSTSSSTSSSSSSSTSSSSTSTTTTT) the composition is skewed to low complexity. Residues 932–950 (VQIQSSPFGNSTTIVNKLT) show a composition bias toward polar residues. Positions 951–1007 (NIDNNNNNNNNNNNNNNNNNNINNNNNNNNNNNNNNNNNNNNNNNNNNNNNNNNNNI) are enriched in low complexity. In terms of domain architecture, Protein kinase spans 1185-1452 (VVCEEQIGVG…YIVKELTNFY (268 aa)). ATP contacts are provided by residues 1191-1199 (IGVGGFGLV) and Lys-1216. The active-site Proton acceptor is Asp-1313. The segment at 1464–1487 (KSINDKSPHPDLISNGVPKLQIAK) is disordered.

Belongs to the protein kinase superfamily. TKL Ser/Thr protein kinase family. ROCO subfamily.

The catalysed reaction is L-seryl-[protein] + ATP = O-phospho-L-seryl-[protein] + ADP + H(+). It carries out the reaction L-threonyl-[protein] + ATP = O-phospho-L-threonyl-[protein] + ADP + H(+). This is Probable serine/threonine-protein kinase roco11 (roco11) from Dictyostelium discoideum (Social amoeba).